A 431-amino-acid polypeptide reads, in one-letter code: Glutamate-1-semialdehyde 2,1-aminomutase (431 aa).

Residue Lys269 is modified to N6-(pyridoxal phosphate)lysine.

This sequence belongs to the class-III pyridoxal-phosphate-dependent aminotransferase family. HemL subfamily. Homodimer. Pyridoxal 5'-phosphate is required as a cofactor.

It is found in the cytoplasm. It carries out the reaction (S)-4-amino-5-oxopentanoate = 5-aminolevulinate. Its pathway is porphyrin-containing compound metabolism; protoporphyrin-IX biosynthesis; 5-aminolevulinate from L-glutamyl-tRNA(Glu): step 2/2. It functions in the pathway porphyrin-containing compound metabolism; chlorophyll biosynthesis. The chain is Glutamate-1-semialdehyde 2,1-aminomutase from Chlorobium chlorochromatii (strain CaD3).